A 104-amino-acid chain; its full sequence is Large ribosomal subunit protein uL24 (104 aa).

The protein belongs to the universal ribosomal protein uL24 family. In terms of assembly, part of the 50S ribosomal subunit.

In terms of biological role, one of two assembly initiator proteins, it binds directly to the 5'-end of the 23S rRNA, where it nucleates assembly of the 50S subunit. Its function is as follows. One of the proteins that surrounds the polypeptide exit tunnel on the outside of the subunit. The chain is Large ribosomal subunit protein uL24 from Shewanella sp. (strain W3-18-1).